A 940-amino-acid chain; its full sequence is Isoleucine--tRNA ligase (940 aa).

Positions Pro58–His68 match the 'HIGH' region motif. An L-isoleucyl-5'-AMP-binding site is contributed by Glu563. Positions Lys604–Ser608 match the 'KMSKS' region motif. Position 607 (Lys607) interacts with ATP. Cys903, Cys906, Cys923, and Cys926 together coordinate Zn(2+).

It belongs to the class-I aminoacyl-tRNA synthetase family. IleS type 1 subfamily. Monomer. Zn(2+) serves as cofactor.

It is found in the cytoplasm. It carries out the reaction tRNA(Ile) + L-isoleucine + ATP = L-isoleucyl-tRNA(Ile) + AMP + diphosphate. Catalyzes the attachment of isoleucine to tRNA(Ile). As IleRS can inadvertently accommodate and process structurally similar amino acids such as valine, to avoid such errors it has two additional distinct tRNA(Ile)-dependent editing activities. One activity is designated as 'pretransfer' editing and involves the hydrolysis of activated Val-AMP. The other activity is designated 'posttransfer' editing and involves deacylation of mischarged Val-tRNA(Ile). The polypeptide is Isoleucine--tRNA ligase (Buchnera aphidicola subsp. Acyrthosiphon pisum (strain APS) (Acyrthosiphon pisum symbiotic bacterium)).